The primary structure comprises 206 residues: Sclerostin domain-containing protein 1 (206 aa).

Residues 1-23 (MLPPAIHLSLIPLLCILMRNCLA) form the signal peptide. The segment at 42-62 (AHPSSNSTLNQARNGGRHFSS) is disordered. The segment covering 44-62 (PSSNSTLNQARNGGRHFSS) has biased composition (polar residues). The N-linked (GlcNAc...) asparagine glycan is linked to N47. 4 cysteine pairs are disulfide-bonded: C75–C133, C89–C147, C100–C163, and C104–C165. The region spanning 75 to 170 (CRELRSTKYI…TACKCKRYTR (96 aa)) is the CTCK domain. A glycan (N-linked (GlcNAc...) asparagine) is linked at N173. A disordered region spans residues 176–206 (SHNFESVSPAKPAQHHRERKRASKSSKHSLS). The span at 188-206 (AQHHRERKRASKSSKHSLS) shows a compositional bias: basic residues.

This sequence belongs to the sclerostin family. In terms of assembly, interacts with BMP2, BMP4, BMP6 and BMP7 with high affinity. As to expression, highly expressed in kidney at renal collecting ducts level and weakly in brain.

The protein resides in the secreted. In terms of biological role, may be involved in the onset of endometrial receptivity for implantation/sensitization for the decidual cell reaction. Enhances Wnt signaling and inhibits TGF-beta signaling. Directly antagonizes activity of BMP2, BMP4, BMP6 and BMP7 in a dose-dependent manner. The sequence is that of Sclerostin domain-containing protein 1 (Sostdc1) from Mus musculus (Mouse).